The primary structure comprises 531 residues: Serine protease gd (531 aa).

The first 19 residues, 1–19, serve as a signal peptide directing secretion; sequence MRLHLAAILILCIEHVTKA. Residues 155–174 are disordered; sequence PEEEEVRKTDDKPPSTPHIQ. The Peptidase S1 domain maps to 246-531; it reads IESDSADSLP…FLDWITAFVI (286 aa). A glycan (N-linked (GlcNAc...) asparagine) is linked at Asn-272. A disulfide bridge connects residues Cys-280 and Cys-296. Residues His-295 and Asp-350 each act as charge relay system in the active site. 2 N-linked (GlcNAc...) asparagine glycosylation sites follow: Asn-397 and Asn-445. The cysteines at positions 432 and 449 are disulfide-linked. Ser-471 serves as the catalytic Charge relay system.

The protein belongs to the peptidase S1 family. Proteolytically activated by the protease ndl. In terms of tissue distribution, expression begins in previtellogenic stages and is seen in germline-derived nurse cells of the germarium. Expression continues throughout oogenesis with transcripts from the nurse cells accumulating in the oocytes. Most abundant in the ovaries, the level of protein decreases from the moment of egg laying and is essentially gone by 4 hours.

It localises to the secreted. Its function is as follows. Component of the extracellular signaling pathway that establishes the dorsal-ventral pathway of the embryo. A protease cascade involving ndl, gd, snk and ea results in activation of the spz Toll receptor ligand; acts downstream of ndl but upstream of snk and ea. Activation of ea requires activation of the ndl-gd-snk protease cascade and sulfation of a vitelline membrane component by pip. Localized activation of the Toll receptor in the ventral region of the embryo defines cell identities along the dorsal-ventral continuum. The sequence is that of Serine protease gd from Drosophila melanogaster (Fruit fly).